Reading from the N-terminus, the 265-residue chain is Thymidine kinase 2, mitochondrial (265 aa).

The N-terminal 33 residues, methionine 1–arginine 33, are a transit peptide targeting the mitochondrion. A compositionally biased stretch (low complexity) spans serine 21–serine 31. The segment at serine 21 to arginine 45 is disordered. Glycine 57 to threonine 65 lines the ATP pocket. Glutamate 133 acts as the Proton acceptor in catalysis.

Belongs to the DCK/DGK family. Homodimer.

The protein resides in the mitochondrion. It catalyses the reaction thymidine + ATP = dTMP + ADP + H(+). The catalysed reaction is 2'-deoxycytidine + ATP = dCMP + ADP + H(+). It carries out the reaction 2'-deoxyuridine + ATP = dUMP + ADP + H(+). Phosphorylates thymidine, deoxycytidine, and deoxyuridine in the mitochondrial matrix. In non-replicating cells, where cytosolic dNTP synthesis is down-regulated, mtDNA synthesis depends solely on TK2 and DGUOK. The chain is Thymidine kinase 2, mitochondrial (TK2) from Macaca fascicularis (Crab-eating macaque).